The sequence spans 527 residues: Arginine--tRNA ligase (527 aa).

Positions 108 to 118 (ANPTGPLHIGH) match the 'HIGH' region motif.

It belongs to the class-I aminoacyl-tRNA synthetase family. As to quaternary structure, monomer.

Its subcellular location is the cytoplasm. The enzyme catalyses tRNA(Arg) + L-arginine + ATP = L-arginyl-tRNA(Arg) + AMP + diphosphate. The sequence is that of Arginine--tRNA ligase from Sulfurimonas denitrificans (strain ATCC 33889 / DSM 1251) (Thiomicrospira denitrificans (strain ATCC 33889 / DSM 1251)).